Consider the following 216-residue polypeptide: MOB kinase activator 3C (216 aa).

Zn(2+)-binding residues include Cys82, Cys87, His164, and His169.

Belongs to the MOB1/phocein family.

In terms of biological role, may regulate the activity of kinases. The polypeptide is MOB kinase activator 3C (MOB3C) (Bos taurus (Bovine)).